Consider the following 230-residue polypeptide: MVKKHSKKYLAAAEKIDHSKKYSLADAATLVKDISFTNFDSNVEVVFDLNVDTTKADQQLRGAIVLPNGSGNPKTVVVFADGEKAKDATQAGADFVGTDDLIQKVQSGWTDFDVAIATPDQMAKVGRVGRALGPKGLMPNPKEGTVTMDVTKAVSDAKGGQVTYRTDKNGNVAVPVGKVSFDSDKLAENIKSVSSTILGARPSTVKGTYVLSAHLASTMGPGVELDVSSL.

The protein belongs to the universal ribosomal protein uL1 family. As to quaternary structure, part of the 50S ribosomal subunit.

Its function is as follows. Binds directly to 23S rRNA. The L1 stalk is quite mobile in the ribosome, and is involved in E site tRNA release. In terms of biological role, protein L1 is also a translational repressor protein, it controls the translation of the L11 operon by binding to its mRNA. This is Large ribosomal subunit protein uL1 from Oenococcus oeni (strain ATCC BAA-331 / PSU-1).